We begin with the raw amino-acid sequence, 269 residues long: Ribosomal RNA small subunit methyltransferase J (269 aa).

Residues 125-126 and aspartate 179 contribute to the S-adenosyl-L-methionine site; that span reads ER.

This sequence belongs to the methyltransferase superfamily. RsmJ family.

The protein localises to the cytoplasm. The catalysed reaction is guanosine(1516) in 16S rRNA + S-adenosyl-L-methionine = N(2)-methylguanosine(1516) in 16S rRNA + S-adenosyl-L-homocysteine + H(+). Specifically methylates the guanosine in position 1516 of 16S rRNA. The protein is Ribosomal RNA small subunit methyltransferase J of Pseudomonas syringae pv. tomato (strain ATCC BAA-871 / DC3000).